The primary structure comprises 356 residues: Alanine racemase (356 aa).

The active-site Proton acceptor; specific for D-alanine is the Lys35. Lys35 carries the N6-(pyridoxal phosphate)lysine modification. Arg130 contributes to the substrate binding site. Tyr253 functions as the Proton acceptor; specific for L-alanine in the catalytic mechanism. Residue Met301 coordinates substrate.

This sequence belongs to the alanine racemase family. Pyridoxal 5'-phosphate is required as a cofactor.

The catalysed reaction is L-alanine = D-alanine. It participates in amino-acid biosynthesis; D-alanine biosynthesis; D-alanine from L-alanine: step 1/1. In terms of biological role, catalyzes the interconversion of L-alanine and D-alanine. May also act on other amino acids. The chain is Alanine racemase (alr) from Sodalis glossinidius (strain morsitans).